We begin with the raw amino-acid sequence, 87 residues long: U3-theraphotoxin-Hhn1m (87 aa).

The first 24 residues, 1 to 24 (MVNMKASMFLTFAGLVLLFVVCYA), serve as a signal peptide directing secretion. Residues 25 to 52 (SESEEKEFPKEMLSSIFAVDNDFKQEER) constitute a propeptide that is removed on maturation. Intrachain disulfides connect cysteine 54–cysteine 67, cysteine 61–cysteine 72, and cysteine 66–cysteine 79.

Belongs to the neurotoxin 10 (Hwtx-1) family. 51 (Hntx-8) subfamily. Hntx-8 sub-subfamily. In terms of tissue distribution, expressed by the venom gland.

The protein resides in the secreted. Functionally, ion channel inhibitor. The protein is U3-theraphotoxin-Hhn1m of Cyriopagopus hainanus (Chinese bird spider).